Reading from the N-terminus, the 855-residue chain is Envelope glycoprotein gp160 (855 aa).

An N-terminal signal peptide occupies residues 1–31 (MRAREIERNCPNLWKWGIMLLGILMICSAAD). Over 32-683 (NLWVTVYYGV…ITQWLWYIKI (652 aa)) the chain is Extracellular. C53 and C73 are joined by a disulfide. 15 N-linked (GlcNAc...) asparagine; by host glycosylation sites follow: N87, N129, N140, N145, N154, N158, N186, N189, N199, N236, N243, N264, N278, N291, and N297. 5 disulfides stabilise this stretch: C118/C207, C125/C198, C130/C155, C220/C249, and C230/C241. Positions 130–154 (CTDESDEWMGNVTGKNVTEDIRMKN) are V1. The segment at 155–198 (CSFNITTVVRDKTKQVHALFYRLDIVPIDNDNSTNSTNYRLINC) is V2. A V3 region spans residues 298-331 (CTRPYKNTRQSTPIGLGQALYTTRGRTKIIGQAH). A disulfide bridge connects residues C298 and C332. N-linked (GlcNAc...) asparagine; by host glycosylation is found at N333, N340, and N355. The tract at residues 364–374 (SSGGDAEITTH) is CD4-binding loop. Cystine bridges form between C378–C444 and C385–C417. Residues 385-417 (CNTSGLFNSTWNINNSEGANSTESDNKLITLQC) form a V4 region. Residues N386, N392, N398, N404, N443, N447, N460, N461, and N464 are each glycosylated (N-linked (GlcNAc...) asparagine; by host). 2 V5 regions span residues 459 to 470 (TNNSSNETFRPG) and 462 to 470 (SSNETFRPG). The segment at 511-531 (AIGLGAMFLGFLGAAGSTMGA) is fusion peptide. Positions 573 to 591 (KQLQARILAVERYLKDQQL) are immunosuppression. C597 and C603 are joined by a disulfide. Residues N610, N615, N624, N636, and N673 are each glycosylated (N-linked (GlcNAc...) asparagine; by host). The stretch at 632 to 666 (REIDNYTGLIYRLIEESQTQQEKNEQELLELDKWA) forms a coiled coil. The MPER; binding to GalCer stretch occupies residues 661–682 (ELDKWASLWNWFNITQWLWYIK). The helical transmembrane segment at 684 to 704 (FIMIVGGLIGLRIVFAVLSLV) threads the bilayer. Over 705–855 (NRVRQGYSPL…IRQGLERLLL (151 aa)) the chain is Cytoplasmic. The short motif at 711–714 (YSPL) is the YXXL motif; contains endocytosis signal element. C763 carries S-palmitoyl cysteine; by host lipidation. A Di-leucine internalization motif motif is present at residues 854–855 (LL).

It belongs to the HIV-1 env protein family. The mature envelope protein (Env) consists of a homotrimer of non-covalently associated gp120-gp41 heterodimers. The resulting complex protrudes from the virus surface as a spike. There seems to be as few as 10 spikes on the average virion. Interacts with host CD4, CCR5 and CXCR4. Gp120 also interacts with the C-type lectins CD209/DC-SIGN and CLEC4M/DC-SIGNR (collectively referred to as DC-SIGN(R)). Gp120 and gp41 interact with GalCer. Gp120 interacts with host ITGA4/ITGB7 complex; on CD4+ T-cells, this interaction results in rapid activation of integrin ITGAL/LFA-1, which facilitates efficient cell-to-cell spreading of HIV-1. Gp120 interacts with cell-associated heparan sulfate; this interaction increases virus infectivity on permissive cells and may be involved in infection of CD4- cells. In terms of assembly, the mature envelope protein (Env) consists of a homotrimer of non-covalently associated gp120-gp41 heterodimers. The resulting complex protrudes from the virus surface as a spike. There seems to be as few as 10 spikes on the average virion. Post-translationally, highly glycosylated by host. The high number of glycan on the protein is reffered to as 'glycan shield' because it contributes to hide protein sequence from adaptive immune system. In terms of processing, palmitoylation of the transmembrane protein and of Env polyprotein (prior to its proteolytic cleavage) is essential for their association with host cell membrane lipid rafts. Palmitoylation is therefore required for envelope trafficking to classical lipid rafts, but not for viral replication. Specific enzymatic cleavages in vivo yield mature proteins. Envelope glycoproteins are synthesized as an inactive precursor that is heavily N-glycosylated and processed likely by host cell furin in the Golgi to yield the mature SU and TM proteins. The cleavage site between SU and TM requires the minimal sequence [KR]-X-[KR]-R. About 2 of the 9 disulfide bonds of gp41 are reduced by P4HB/PDI, following binding to CD4 receptor.

It is found in the virion membrane. The protein localises to the host cell membrane. It localises to the host endosome membrane. Its function is as follows. Oligomerizes in the host endoplasmic reticulum into predominantly trimers. In a second time, gp160 transits in the host Golgi, where glycosylation is completed. The precursor is then proteolytically cleaved in the trans-Golgi and thereby activated by cellular furin or furin-like proteases to produce gp120 and gp41. Attaches the virus to the host lymphoid cell by binding to the primary receptor CD4. This interaction induces a structural rearrangement creating a high affinity binding site for a chemokine coreceptor like CXCR4 and/or CCR5. Acts as a ligand for CD209/DC-SIGN and CLEC4M/DC-SIGNR, which are respectively found on dendritic cells (DCs), and on endothelial cells of liver sinusoids and lymph node sinuses. These interactions allow capture of viral particles at mucosal surfaces by these cells and subsequent transmission to permissive cells. HIV subverts the migration properties of dendritic cells to gain access to CD4+ T-cells in lymph nodes. Virus transmission to permissive T-cells occurs either in trans (without DCs infection, through viral capture and transmission), or in cis (following DCs productive infection, through the usual CD4-gp120 interaction), thereby inducing a robust infection. In trans infection, bound virions remain infectious over days and it is proposed that they are not degraded, but protected in non-lysosomal acidic organelles within the DCs close to the cell membrane thus contributing to the viral infectious potential during DCs' migration from the periphery to the lymphoid tissues. On arrival at lymphoid tissues, intact virions recycle back to DCs' cell surface allowing virus transmission to CD4+ T-cells. Functionally, acts as a class I viral fusion protein. Under the current model, the protein has at least 3 conformational states: pre-fusion native state, pre-hairpin intermediate state, and post-fusion hairpin state. During fusion of viral and target intracellular membranes, the coiled coil regions (heptad repeats) assume a trimer-of-hairpins structure, positioning the fusion peptide in close proximity to the C-terminal region of the ectodomain. The formation of this structure appears to drive apposition and subsequent fusion of viral and target cell membranes. Complete fusion occurs in host cell endosomes and is dynamin-dependent, however some lipid transfer might occur at the plasma membrane. The virus undergoes clathrin-dependent internalization long before endosomal fusion, thus minimizing the surface exposure of conserved viral epitopes during fusion and reducing the efficacy of inhibitors targeting these epitopes. Membranes fusion leads to delivery of the nucleocapsid into the cytoplasm. This chain is Envelope glycoprotein gp160, found in Homo sapiens (Human).